A 219-amino-acid chain; its full sequence is Nuclear transcription factor Y subunit B-8 (219 aa).

The interval 1-26 (MPDSDNDSGGPSNYAGGELSSPREQD) is disordered. Residues 29–35 (LPIANVS) mediate DNA binding. Residues 56–67 (VQECVSEFISFI) are subunit association domain (SAD). Over residues 119-134 (AAASTTGAGTSAASTT) the composition is skewed to low complexity. 2 disordered regions span residues 119-142 (AAAS…QHTA) and 166-219 (GQPM…NRGA). Residues 190–206 (GGRGGFGHHPGGGGGGS) are compositionally biased toward gly residues.

This sequence belongs to the NFYB/HAP3 subunit family. In terms of assembly, heterotrimeric transcription factor composed of three components, NF-YA, NF-YB and NF-YC. NF-YB and NF-YC must interact and dimerize for NF-YA association and DNA binding. Interacts with NFYC2, NFYC4 and NFYC6.

It localises to the cytoplasm. Component of the NF-Y/HAP transcription factor complex. The chain is Nuclear transcription factor Y subunit B-8 from Oryza sativa subsp. japonica (Rice).